Reading from the N-terminus, the 320-residue chain is Acetyl-coenzyme A carboxylase carboxyl transferase subunit alpha (320 aa).

In terms of domain architecture, CoA carboxyltransferase C-terminal spans 33–294 (AFESEIQALR…GDAVEDELKA (262 aa)).

This sequence belongs to the AccA family. As to quaternary structure, acetyl-CoA carboxylase is a heterohexamer composed of biotin carboxyl carrier protein (AccB), biotin carboxylase (AccC) and two subunits each of ACCase subunit alpha (AccA) and ACCase subunit beta (AccD).

Its subcellular location is the cytoplasm. It catalyses the reaction N(6)-carboxybiotinyl-L-lysyl-[protein] + acetyl-CoA = N(6)-biotinyl-L-lysyl-[protein] + malonyl-CoA. Its pathway is lipid metabolism; malonyl-CoA biosynthesis; malonyl-CoA from acetyl-CoA: step 1/1. Its function is as follows. Component of the acetyl coenzyme A carboxylase (ACC) complex. First, biotin carboxylase catalyzes the carboxylation of biotin on its carrier protein (BCCP) and then the CO(2) group is transferred by the carboxyltransferase to acetyl-CoA to form malonyl-CoA. In Caulobacter sp. (strain K31), this protein is Acetyl-coenzyme A carboxylase carboxyl transferase subunit alpha.